The following is a 145-amino-acid chain: Ribonuclease P protein component (145 aa).

Positions 121-145 (PAAAGTMPPARTVHPSSLSPTEPEL) are disordered. Over residues 134–145 (HPSSLSPTEPEL) the composition is skewed to polar residues.

Belongs to the RnpA family. As to quaternary structure, consists of a catalytic RNA component (M1 or rnpB) and a protein subunit.

It catalyses the reaction Endonucleolytic cleavage of RNA, removing 5'-extranucleotides from tRNA precursor.. In terms of biological role, RNaseP catalyzes the removal of the 5'-leader sequence from pre-tRNA to produce the mature 5'-terminus. It can also cleave other RNA substrates such as 4.5S RNA. The protein component plays an auxiliary but essential role in vivo by binding to the 5'-leader sequence and broadening the substrate specificity of the ribozyme. This Xanthomonas axonopodis pv. citri (strain 306) protein is Ribonuclease P protein component.